Consider the following 147-residue polypeptide: Acidic phospholipase A2 1 (147 aa).

The signal sequence occupies residues 1-19; it reads MNPAHLLVLAAVCVSLLGA. Residues 20 to 27 constitute a propeptide that is removed on maturation; the sequence is AIVPPQPL. 7 disulfide bridges follow: C38–C99, C54–C146, C56–C72, C71–C127, C78–C120, C88–C113, and C106–C118. Residues Y55, G57, and G59 each coordinate Ca(2+). H75 is a catalytic residue. D76 contacts Ca(2+). D121 is an active-site residue.

It belongs to the phospholipase A2 family. Group I subfamily. D49 sub-subfamily. It depends on Ca(2+) as a cofactor. Expressed by the venom gland.

It localises to the secreted. The catalysed reaction is a 1,2-diacyl-sn-glycero-3-phosphocholine + H2O = a 1-acyl-sn-glycero-3-phosphocholine + a fatty acid + H(+). Its function is as follows. PLA2 catalyzes the calcium-dependent hydrolysis of the 2-acyl groups in 3-sn-phosphoglycerides. This is Acidic phospholipase A2 1 from Bungarus flaviceps flaviceps (Red-headed krait).